Consider the following 84-residue polypeptide: Large ribosomal subunit protein bL27 (84 aa).

Residues 1–21 (MAHKKGGGSTKNGRDSNPQYL) are disordered.

It belongs to the bacterial ribosomal protein bL27 family.

In Chloroherpeton thalassium (strain ATCC 35110 / GB-78), this protein is Large ribosomal subunit protein bL27.